Reading from the N-terminus, the 390-residue chain is Manganese peroxidase 2 (390 aa).

A signal peptide spans 1-23; the sequence is MAFNFAAILAFVSLAAVTSAAPS. 5 disulfide bridges follow: Cys-27-Cys-39, Cys-38-Cys-313, Cys-57-Cys-141, Cys-277-Cys-343, and Cys-365-Cys-372. Residues Glu-59 and Glu-63 each contribute to the Mn(2+) site. The Proton acceptor role is filled by His-70. Residues Asp-71, Gly-86, Asp-88, and Ser-90 each contribute to the Ca(2+) site. An N-linked (GlcNAc...) asparagine glycan is attached at Asn-155. His-197 is a heme b binding site. Ser-198 contacts Ca(2+). Asp-203 contributes to the Mn(2+) binding site. Residues Asp-215, Thr-217, and Asp-222 each coordinate Ca(2+). The N-linked (GlcNAc...) asparagine glycan is linked to Asn-241.

This sequence belongs to the peroxidase family. Ligninase subfamily. Heme b serves as cofactor. Ca(2+) is required as a cofactor.

Its subcellular location is the secreted. It carries out the reaction 2 Mn(2+) + H2O2 + 2 H(+) = 2 Mn(3+) + 2 H2O. Functionally, catalyzes the oxidation of Mn(2+) to Mn(3+). The latter, acting as a diffusible redox mediator, is capable of oxidizing a variety of lignin compounds. This chain is Manganese peroxidase 2 (mnp2), found in Phlebia radiata (White-rot fungus).